Here is a 950-residue protein sequence, read N- to C-terminus: Glycine dehydrogenase (decarboxylating) (950 aa).

Position 698 is an N6-(pyridoxal phosphate)lysine (Lys698).

Belongs to the GcvP family. The glycine cleavage system is composed of four proteins: P, T, L and H. It depends on pyridoxal 5'-phosphate as a cofactor.

It catalyses the reaction N(6)-[(R)-lipoyl]-L-lysyl-[glycine-cleavage complex H protein] + glycine + H(+) = N(6)-[(R)-S(8)-aminomethyldihydrolipoyl]-L-lysyl-[glycine-cleavage complex H protein] + CO2. Functionally, the glycine cleavage system catalyzes the degradation of glycine. The P protein binds the alpha-amino group of glycine through its pyridoxal phosphate cofactor; CO(2) is released and the remaining methylamine moiety is then transferred to the lipoamide cofactor of the H protein. This Neisseria meningitidis serogroup C / serotype 2a (strain ATCC 700532 / DSM 15464 / FAM18) protein is Glycine dehydrogenase (decarboxylating).